A 502-amino-acid chain; its full sequence is Cytochrome P450 monooxygenase orf6 (502 aa).

A helical transmembrane segment spans residues 3-25; the sequence is ALWVLAVALVAYFLCLSIYRLFL. Residue N382 is glycosylated (N-linked (GlcNAc...) asparagine). C445 contributes to the heme binding site.

Belongs to the cytochrome P450 family. The cofactor is heme.

It is found in the membrane. It participates in mycotoxin biosynthesis. Functionally, cytochrome P450 monooxygenase; part of the gene cluster that mediates the biosynthesis of brefeldin A (BFA), a protein transport inhibitor that shows antiviral, antifungal, and antitumor properties. The proposed biosynthesis of BFA involves formation of an acyclic polyketide chain that is differentially tailored throughout the backbone. The highly reducing polyketide synthase Bref-PKS is proposed to synthesize the precisely reduced octaketide precursor, which could then be directly offloaded by the thiohydrolase enzyme Bref-TH followed by a cytochrome P450 monooxygenase-mediated formation of the cyclopentane ring and macrocyclization to afford 7-deoxy BFA. Alternatively, the first ring annulation can also occur on the ACP-tethered intermediate before the thiohydrolase release and lactonization. The C7-hydroxylation by another cytochrome P450 monooxygenase is believed to be the final step in the process to obtain the final structure of BFA. In addition to the HRPKS Bref-PKS and the thiohydrolase Bref-TH, the brefeldin A biosynthesis cluster contains 4 cytochrome p450 monooxygenases (called orf3 to orf6), as well a the probable cluster-specific transcription regulator orf8. The polypeptide is Cytochrome P450 monooxygenase orf6 (Eupenicillium brefeldianum (Penicillium brefeldianum)).